The primary structure comprises 332 residues: Anthranilate phosphoribosyltransferase (332 aa).

Residues G79, 82 to 83 (GD), S87, 89 to 92 (NIST), 107 to 115 (KHGNRSVSS), and S119 contribute to the 5-phospho-alpha-D-ribose 1-diphosphate site. G79 contributes to the anthranilate binding site. S91 provides a ligand contact to Mg(2+). An anthranilate-binding site is contributed by N110. Anthranilate is bound at residue R165. Mg(2+) contacts are provided by D223 and E224.

Belongs to the anthranilate phosphoribosyltransferase family. In terms of assembly, homodimer. Mg(2+) serves as cofactor.

The enzyme catalyses N-(5-phospho-beta-D-ribosyl)anthranilate + diphosphate = 5-phospho-alpha-D-ribose 1-diphosphate + anthranilate. Its pathway is amino-acid biosynthesis; L-tryptophan biosynthesis; L-tryptophan from chorismate: step 2/5. In terms of biological role, catalyzes the transfer of the phosphoribosyl group of 5-phosphorylribose-1-pyrophosphate (PRPP) to anthranilate to yield N-(5'-phosphoribosyl)-anthranilate (PRA). This is Anthranilate phosphoribosyltransferase from Erwinia tasmaniensis (strain DSM 17950 / CFBP 7177 / CIP 109463 / NCPPB 4357 / Et1/99).